The chain runs to 567 residues: Urease subunit alpha (567 aa).

The region spanning 129 to 567 (GGVDSHIHFI…LPLAQRYFLF (439 aa)) is the Urease domain. The Ni(2+) site is built by His-134, His-136, and Lys-217. Lys-217 carries the N6-carboxylysine modification. His-219 provides a ligand contact to substrate. Residues His-246 and His-272 each contribute to the Ni(2+) site. His-320 (proton donor) is an active-site residue. Residue Asp-360 coordinates Ni(2+).

This sequence belongs to the metallo-dependent hydrolases superfamily. Urease alpha subunit family. Heterotrimer of UreA (gamma), UreB (beta) and UreC (alpha) subunits. Three heterotrimers associate to form the active enzyme. The cofactor is Ni cation. Carboxylation allows a single lysine to coordinate two nickel ions.

Its subcellular location is the cytoplasm. It carries out the reaction urea + 2 H2O + H(+) = hydrogencarbonate + 2 NH4(+). It functions in the pathway nitrogen metabolism; urea degradation; CO(2) and NH(3) from urea (urease route): step 1/1. The chain is Urease subunit alpha from Pseudomonas putida (strain ATCC 700007 / DSM 6899 / JCM 31910 / BCRC 17059 / LMG 24140 / F1).